Here is a 498-residue protein sequence, read N- to C-terminus: MTTKKLYFLSISIIILVAISIAIYITLNSNTKTRLTNDSQQQIDKIIEHDLQKGHIPGASILIVKNGKVFLNKGYGYQDVDKKVKASPTTKYEIASNTKAFTGLAILKLAQEGRLNLNDDVSKHVPHFKMNYNGQNETITIKQLLAQTSGIPSDITSEDAVTNKNNRLNDVTRAIMGDELHHKPGEEFEYSNMNYDLLGLIIQNVTKQSYTKYITNSWLKPLHMTHTSFKQTNNKSKHDAIGYELQGSTPVVSKPEFNLWDTPSAYMMTSTEDLEHWIKFQLNPPDKYKSLVQQSHKNLSSTIGEPNANAYASGWFTNNDEHLVFHSGTLDNFSSFILLNPKQNYGIVVLANLNSEYVPKLVEHLNTQIVNHKRYSTVASILNQYKDQFNIVTVLMTTLILLAFIFSAYRAWQMRHGQILLRRSKRIAVLSWLTLCLCIAIALILYALPYLILGSNNWSFVLTWLPIEIKLALITTLIALFSTLIVILLFLHTKITKT.

Transmembrane regions (helical) follow at residues 6-26 (LYFLSISIIILVAISIAIYIT), 389-409 (FNIVTVLMTTLILLAFIFSAY), 433-453 (LTLCLCIAIALILYALPYLIL), and 471-491 (LALITTLIALFSTLIVILLFL).

The protein localises to the cell membrane. Functionally, its precise function is unknown. Has no penicillin-binding activity and is not involved in methicillin resistance. The chain is Protein flp (flp) from Staphylococcus aureus (strain Mu50 / ATCC 700699).